Consider the following 760-residue polypeptide: Leucine-rich repeat extensin-like protein 3 (760 aa).

The signal sequence occupies residues 1–20; the sequence is MKKTIQILLFFFFLINLTNA. Residue Asn-16 is glycosylated (N-linked (GlcNAc...) asparagine). The LRR 1 repeat unit spans residues 21 to 45; that stretch reads LSISSDGGVLSDNEVRHIQRRQLLE. 2 N-linked (GlcNAc...) asparagine glycosylation sites follow: Asn-86 and Asn-98. LRR repeat units lie at residues 113-137, 138-160, 161-185, 186-209, 211-232, 234-255, 256-279, 281-303, and 304-327; these read IRTVAGIDLNHADIAGYLPEELGLL, SDLALFHVNSNRFCGTVPHRFNR, LKLLFELDLSNNRFAGKFPTVVLQL, PSLKFLDLRFNEFEGTVPKELFSK, LDAIFINHNRFRFELPENFGDS, VSVIVLANNRFHGCVPSSLVEM, KNLNEIIFMNNGLNSCLPSDIGRL, NVTVFDVSFNELVGPLPESVGEM, and VSVEQLNVAHNMLSGKIPASICQL. Asn-281 carries N-linked (GlcNAc...) asparagine glycosylation. N-linked (GlcNAc...) asparagine glycosylation occurs at Asn-332. Disordered stretches follow at residues 389–502, 515–610, and 663–748; these read GRSV…PPPP, PPVY…YSPP, and PPPP…PVIG. 2 stretches are compositionally biased toward pro residues: residues 394 to 415 and 423 to 502; these read PRPPVVTPLPPPSLPSPPPPAP and LTSP…PPPP. The segment at 409–758 is contains the Ser-Pro(4) repeats; that stretch reads SPPPPAPIFS…VSYASPPPPP (350 aa). The segment covering 663–745 has biased composition (pro residues); it reads PPPPVHYSSP…SPEYEGPLPP (83 aa).

Interacts with SH3P1. In terms of processing, hydroxylated on proline residues in the S-P-P-P-P repeat. O-glycosylated on hydroxyprolines. Expressed in roots, stems, leaves and flowers, mostly in vascular tissues.

The protein localises to the secreted. The protein resides in the cell wall. Modulates cell morphogenesis by regulating cell wall formation and assembly, and/or growth polarization. This chain is Leucine-rich repeat extensin-like protein 3 (LRX3), found in Arabidopsis thaliana (Mouse-ear cress).